The sequence spans 332 residues: Aspartate carbamoyltransferase catalytic subunit (332 aa).

Carbamoyl phosphate is bound by residues Arg-78 and Thr-79. Residue Lys-106 participates in L-aspartate binding. Carbamoyl phosphate contacts are provided by Arg-128, His-156, and Gln-159. Arg-189 and Arg-243 together coordinate L-aspartate. Positions 284 and 285 each coordinate carbamoyl phosphate.

The protein belongs to the aspartate/ornithine carbamoyltransferase superfamily. ATCase family. In terms of assembly, heterododecamer (2C3:3R2) of six catalytic PyrB chains organized as two trimers (C3), and six regulatory PyrI chains organized as three dimers (R2).

The enzyme catalyses carbamoyl phosphate + L-aspartate = N-carbamoyl-L-aspartate + phosphate + H(+). It functions in the pathway pyrimidine metabolism; UMP biosynthesis via de novo pathway; (S)-dihydroorotate from bicarbonate: step 2/3. Its function is as follows. Catalyzes the condensation of carbamoyl phosphate and aspartate to form carbamoyl aspartate and inorganic phosphate, the committed step in the de novo pyrimidine nucleotide biosynthesis pathway. The polypeptide is Aspartate carbamoyltransferase catalytic subunit (Caulobacter vibrioides (strain ATCC 19089 / CIP 103742 / CB 15) (Caulobacter crescentus)).